We begin with the raw amino-acid sequence, 422 residues long: Electron transfer flavoprotein subunit alpha (422 aa).

The interval 61 to 80 (KRIDRSGTQQGAGGGKASAS) is disordered. FAD is bound by residues 329–330 (SR), 343–347 (QVGAT), 360–367 (GISGAIQH), and asparagine 381.

This sequence belongs to the ETF alpha-subunit/FixB family. As to quaternary structure, heterodimer of an alpha and a beta subunit. FAD serves as cofactor.

Its function is as follows. Participates in the electron transfer process during N,N-dimethylglycine (DMG) degradation to sarcosine. The protein is Electron transfer flavoprotein subunit alpha of Chromohalobacter salexigens (strain ATCC BAA-138 / DSM 3043 / CIP 106854 / NCIMB 13768 / 1H11).